A 426-amino-acid chain; its full sequence is Gamma-glutamylputrescine oxidoreductase (426 aa).

The protein belongs to the gamma-glutamylputrescine oxidoreductase family.

The catalysed reaction is gamma-L-glutamylputrescine + O2 + H2O = 4-(gamma-L-glutamylamino)butanal + H2O2 + NH4(+). It functions in the pathway amine and polyamine degradation; putrescine degradation; 4-aminobutanoate from putrescine: step 2/4. In terms of biological role, involved in the breakdown of putrescine via the oxidation of L-glutamylputrescine. This chain is Gamma-glutamylputrescine oxidoreductase (puuB), found in Escherichia coli (strain K12).